A 1807-amino-acid polypeptide reads, in one-letter code: Vitellogenin-2 (1807 aa).

The N-terminal stretch at 1–16 is a signal peptide; that stretch reads MWFPVTLLFLAGVAVA. Residues 24 to 819 form the Vitellogenin domain; that stretch reads WETGNEYQYS…LIPKYVYVGV (796 aa). Cysteines 180 and 224 form a disulfide. Residues 334 to 402 form a disordered region; the sequence is SDSDNRRVRH…SSSSSSEEEN (69 aa). Low complexity predominate over residues 346-397; sequence VSQNSEQENSSESSKSSSQSSSSSSSASSSSSSSSSSSSSSSSSSSSSSSSS. Residues Asn354, Asn579, Asn635, Asn1181, Asn1304, Asn1373, and Asn1506 are each glycosylated (N-linked (GlcNAc...) asparagine). The VWFD domain maps to 1448–1636; it reads QSCTLDKDKV…TYAMTQENCQ (189 aa). Intrachain disulfides connect Cys1450–Cys1599 and Cys1472–Cys1635. Disordered regions lie at residues 1635–1655 and 1684–1723; these read CQGP…HEFP and NRNK…KKHN. N-linked (GlcNAc...) asparagine glycosylation is present at Asn1693. Polar residues predominate over residues 1700-1714; that stretch reads KKQYQANSQESGSSE.

It is found in the secreted. Functionally, precursor of the egg-yolk proteins that are sources of nutrients during embryonic development. This is Vitellogenin-2 from Solenopsis invicta (Red imported fire ant).